The chain runs to 360 residues: Ferrochelatase (360 aa).

Residues His210 and Glu291 each coordinate Fe cation.

It belongs to the ferrochelatase family.

It localises to the cytoplasm. The catalysed reaction is heme b + 2 H(+) = protoporphyrin IX + Fe(2+). It functions in the pathway porphyrin-containing compound metabolism; protoheme biosynthesis; protoheme from protoporphyrin-IX: step 1/1. In terms of biological role, catalyzes the ferrous insertion into protoporphyrin IX. The polypeptide is Ferrochelatase (Pseudoalteromonas atlantica (strain T6c / ATCC BAA-1087)).